The following is a 375-amino-acid chain: Succinyl-diaminopimelate desuccinylase (375 aa).

H66 is a Zn(2+) binding site. Residue D68 is part of the active site. D99 serves as a coordination point for Zn(2+). Catalysis depends on E133, which acts as the Proton acceptor. Residues E134, E162, and H348 each contribute to the Zn(2+) site.

This sequence belongs to the peptidase M20A family. DapE subfamily. In terms of assembly, homodimer. Requires Zn(2+) as cofactor. Co(2+) serves as cofactor.

It carries out the reaction N-succinyl-(2S,6S)-2,6-diaminopimelate + H2O = (2S,6S)-2,6-diaminopimelate + succinate. It functions in the pathway amino-acid biosynthesis; L-lysine biosynthesis via DAP pathway; LL-2,6-diaminopimelate from (S)-tetrahydrodipicolinate (succinylase route): step 3/3. Functionally, catalyzes the hydrolysis of N-succinyl-L,L-diaminopimelic acid (SDAP), forming succinate and LL-2,6-diaminopimelate (DAP), an intermediate involved in the bacterial biosynthesis of lysine and meso-diaminopimelic acid, an essential component of bacterial cell walls. This is Succinyl-diaminopimelate desuccinylase from Stenotrophomonas maltophilia (strain R551-3).